Consider the following 398-residue polypeptide: Argininosuccinate synthase (398 aa).

ATP is bound by residues 9-17 and Ala-36; that span reads AYSGGLDTS. The L-citrulline site is built by Tyr-87 and Ser-92. Gly-117 lines the ATP pocket. Positions 119, 123, and 124 each coordinate L-aspartate. Asn-123 serves as a coordination point for L-citrulline. L-citrulline-binding residues include Arg-127, Ser-176, Ser-185, Glu-261, and Tyr-273.

The protein belongs to the argininosuccinate synthase family. Type 1 subfamily. In terms of assembly, homotetramer.

Its subcellular location is the cytoplasm. It catalyses the reaction L-citrulline + L-aspartate + ATP = 2-(N(omega)-L-arginino)succinate + AMP + diphosphate + H(+). Its pathway is amino-acid biosynthesis; L-arginine biosynthesis; L-arginine from L-ornithine and carbamoyl phosphate: step 2/3. This Desulfotalea psychrophila (strain LSv54 / DSM 12343) protein is Argininosuccinate synthase.